A 671-amino-acid polypeptide reads, in one-letter code: Zinc finger and BTB domain-containing protein 16-A (671 aa).

Residues 34–96 enclose the BTB domain; that stretch reads CDVVIMVDSQ…AYTATLQAKV (63 aa). 2 disordered regions span residues 130 to 167 and 248 to 289; these read ENDT…TEES and VDES…RSSV. Positions 270–279 are enriched in basic and acidic residues; it reads RSGEPDKNRD. Position 283 is a phosphothreonine (Thr283). C2H2-type zinc fingers lie at residues 401–423, 429–451, 458–480, 487–509, 515–537, 544–566, 572–594, 600–622, and 628–650; these read ERCN…RKLH, YGCE…LLSH, IVCD…RQIH, IFCL…MEVH, YICS…LRSH, FECE…KRIH, YECN…YRVH, FECK…LRTH, and YQCT…MKGH.

The protein belongs to the krueppel C2H2-type zinc-finger protein family. As to quaternary structure, interacts with btbd6a (via BTB domain). Post-translationally, polyubiquitinated, leading to its proteasomal degradation. During early stages of primary neurogenesis, expressed in the neural epithelium, with highest levels in the forebrain and midbrain. Also expressed in a posterior-to-anterior gradient in the caudal neural plate at the 3-6 somite stage.

Its subcellular location is the nucleus. It localises to the cytoplasm. The protein operates within protein modification; protein ubiquitination. Functionally, probable transcription factor. Probable substrate-recognition component of an E3 ubiquitin-protein ligase complex which mediates the ubiquitination and subsequent proteasomal degradation of target proteins. Inhibits neurogenesis. This chain is Zinc finger and BTB domain-containing protein 16-A, found in Danio rerio (Zebrafish).